The sequence spans 209 residues: Probable nicotinate-nucleotide adenylyltransferase (209 aa).

It belongs to the NadD family.

It carries out the reaction nicotinate beta-D-ribonucleotide + ATP + H(+) = deamido-NAD(+) + diphosphate. It functions in the pathway cofactor biosynthesis; NAD(+) biosynthesis; deamido-NAD(+) from nicotinate D-ribonucleotide: step 1/1. Catalyzes the reversible adenylation of nicotinate mononucleotide (NaMN) to nicotinic acid adenine dinucleotide (NaAD). The protein is Probable nicotinate-nucleotide adenylyltransferase of Streptococcus pneumoniae serotype 4 (strain ATCC BAA-334 / TIGR4).